We begin with the raw amino-acid sequence, 155 residues long: MIDKSGYRANVAIVLLNKQNRVFWGQRRNRTSWQFPQGGVATGETPLQAMYRELHEEIGLRPQDVEVIASTRDWYKYDIPDSLVRTKEPICIGQKQKWFLLKLKSPESYIDLDANDSPEFDNWRWVSYWYPINHVVYFKQEVYRKALTYFKEYIA.

The region spanning 6-148 (GYRANVAIVL…KQEVYRKALT (143 aa)) is the Nudix hydrolase domain. The short motif at 38–59 (GGVATGETPLQAMYRELHEEIG) is the Nudix box element.

It belongs to the Nudix hydrolase family. RppH subfamily. It depends on a divalent metal cation as a cofactor.

In terms of biological role, accelerates the degradation of transcripts by removing pyrophosphate from the 5'-end of triphosphorylated RNA, leading to a more labile monophosphorylated state that can stimulate subsequent ribonuclease cleavage. This chain is RNA pyrophosphohydrolase, found in Francisella tularensis subsp. tularensis (strain FSC 198).